We begin with the raw amino-acid sequence, 751 residues long: Semaphorin-3C (751 aa).

A signal peptide spans 1-21 (MAVLALHAVFGIFIYFSSVKG). The region spanning 28-511 (RVFLTFNELQ…SEEGVTQVPL (484 aa)) is the Sema domain. N81 carries N-linked (GlcNAc...) asparagine glycosylation. A disulfide bridge links C101 with C112. An N-linked (GlcNAc...) asparagine glycan is attached at N123. Disulfide bonds link C130–C139, C266–C378, and C290–C338. N268 is a glycosylation site (N-linked (GlcNAc...) asparagine). N-linked (GlcNAc...) asparagine glycosylation occurs at N465. C514 and C532 are joined by a disulfide. Residues 571–655 (AYRNAAETVQ…TENNFKQTLA (85 aa)) enclose the Ig-like C2-type domain. Residues N585 and N586 are each glycosylated (N-linked (GlcNAc...) asparagine). C643 and C709 are oxidised to a cystine. Residues 712 to 731 (SRQQGQRREEPQKMRGDYSK) are compositionally biased toward basic and acidic residues. A disordered region spans residues 712–751 (SRQQGQRREEPQKMRGDYSKLKALINSRKSRNRRNQLPAS).

It belongs to the semaphorin family. As to expression, collapsin-1, -2, -3, and -5 bind to overlapping but distinct axon tracts.

The protein resides in the secreted. In terms of biological role, induces the collapse and paralysis of neuronal growth cones. Could potentially act as repulsive cues toward specific neuronal populations. Binds to neuropilin. In Gallus gallus (Chicken), this protein is Semaphorin-3C (SEMA3C).